Here is a 546-residue protein sequence, read N- to C-terminus: CTP synthase (546 aa).

Residues 1 to 266 (MTTRYIFVTG…DDLVVKRFGL (266 aa)) form an amidoligase domain region. CTP is bound at residue Ser-14. Ser-14 is a binding site for UTP. ATP contacts are provided by residues 15 to 20 (SLGKGI) and Asp-72. Mg(2+) is bound by residues Asp-72 and Glu-140. Residues 147–149 (DIE), 187–192 (KTKPTQ), and Lys-223 each bind CTP. UTP is bound by residues 187–192 (KTKPTQ) and Lys-223. An ATP-binding site is contributed by 239-241 (KDV). The region spanning 291-542 (VIGMVGKYIE…VAAASAHQKR (252 aa)) is the Glutamine amidotransferase type-1 domain. An L-glutamine-binding site is contributed by Gly-352. The active-site Nucleophile; for glutamine hydrolysis is the Cys-379. Residues 380–383 (LGMQ), Glu-403, and Arg-470 each bind L-glutamine. Catalysis depends on residues His-515 and Glu-517.

It belongs to the CTP synthase family. Homotetramer.

It catalyses the reaction UTP + L-glutamine + ATP + H2O = CTP + L-glutamate + ADP + phosphate + 2 H(+). The catalysed reaction is L-glutamine + H2O = L-glutamate + NH4(+). It carries out the reaction UTP + NH4(+) + ATP = CTP + ADP + phosphate + 2 H(+). It functions in the pathway pyrimidine metabolism; CTP biosynthesis via de novo pathway; CTP from UDP: step 2/2. With respect to regulation, allosterically activated by GTP, when glutamine is the substrate; GTP has no effect on the reaction when ammonia is the substrate. The allosteric effector GTP functions by stabilizing the protein conformation that binds the tetrahedral intermediate(s) formed during glutamine hydrolysis. Inhibited by the product CTP, via allosteric rather than competitive inhibition. In terms of biological role, catalyzes the ATP-dependent amination of UTP to CTP with either L-glutamine or ammonia as the source of nitrogen. Regulates intracellular CTP levels through interactions with the four ribonucleotide triphosphates. The polypeptide is CTP synthase (Shewanella sp. (strain MR-4)).